A 514-amino-acid chain; its full sequence is Respiratory nitrate reductase 2 beta chain (514 aa).

4Fe-4S ferredoxin-type domains are found at residues 7-35 (VGMVLNLDKCIGCHTCSVTCKNVWTGREG), 174-205 (TFMMYLPRLCEHCLNPSCVATCPSGAIYKREE), and 207-236 (GIVLIDQDKCRGWRLCISGCPYKKIYFNWK). [4Fe-4S] cluster is bound by residues C16, C19, C22, C26, C183, C186, and C191. [3Fe-4S] cluster is bound by residues C195, C216, and C222. [4Fe-4S] cluster contacts are provided by C226, C243, C246, C258, and C262.

As to quaternary structure, dimer of heterotrimers each composed of an alpha, a beta and a gamma chain. Alpha and beta are catalytic chains; gamma chains are involved in binding the enzyme complex to the cytoplasmic membrane. [4Fe-4S] cluster serves as cofactor. The cofactor is [3Fe-4S] cluster.

Its subcellular location is the cell membrane. It catalyses the reaction nitrate + a quinol = a quinone + nitrite + H2O. This is a second nitrate reductase enzyme which can substitute for the NRA enzyme and allows E.coli to use nitrate as an electron acceptor during anaerobic growth. The beta chain is an electron transfer unit containing four cysteine clusters involved in the formation of iron-sulfur centers. Electrons are transferred from the gamma chain to the molybdenum cofactor of the alpha subunit. This chain is Respiratory nitrate reductase 2 beta chain (narY), found in Escherichia coli (strain K12).